Here is a 256-residue protein sequence, read N- to C-terminus: D-aminoacyl-tRNA deacylase (256 aa).

This sequence belongs to the DtdA deacylase family. Monomer. It depends on Zn(2+) as a cofactor.

The catalysed reaction is a D-aminoacyl-tRNA + H2O = a tRNA + a D-alpha-amino acid + H(+). It catalyses the reaction glycyl-tRNA(Ala) + H2O = tRNA(Ala) + glycine + H(+). Its function is as follows. D-aminoacyl-tRNA deacylase with broad substrate specificity. By recycling D-aminoacyl-tRNA to D-amino acids and free tRNA molecules, this enzyme counteracts the toxicity associated with the formation of D-aminoacyl-tRNA entities in vivo. The chain is D-aminoacyl-tRNA deacylase from Thermoplasma volcanium (strain ATCC 51530 / DSM 4299 / JCM 9571 / NBRC 15438 / GSS1).